The sequence spans 199 residues: Twist-related protein 1 (199 aa).

Positions 1 to 18 are enriched in low complexity; that stretch reads MMQDVSSSPVSPADDSLS. The interval 1 to 102 is disordered; it reads MMQDVSSSPV…GGGSPQSYEE (102 aa). Over residues 34–43 the composition is skewed to basic residues; the sequence is RGGRKRRSSR. Composition is skewed to gly residues over residues 46–65 and 80–96; these read AGGG…GGDE and GCGG…GGGS. The region spanning 105–156 is the bHLH domain; sequence TQRVMANVRERQRTQSLNEAFAALRKIIPTLPSDKLSKIQTLKLAARYIDFL. A sufficient for transactivation activity region spans residues 158–188; the sequence is QVLQSDELDSKMASCSYVAHERLSYAFSVWR.

As to quaternary structure, efficient DNA binding requires dimerization with another bHLH protein. Homodimer or heterodimer with E proteins such as TCF3. ID1 binds preferentially to TCF3 but does not interact efficiently with TWIST1 so ID1 levels control the amount of TCF3 available to dimerize with TWIST and thus determine the type of dimer formed.

It localises to the nucleus. Acts as a transcriptional regulator. Inhibits myogenesis by sequestrating E proteins, inhibiting trans-activation by MEF2, and inhibiting DNA-binding by MYOD1 through physical interaction. This interaction probably involves the basic domains of both proteins. Also represses expression of pro-inflammatory cytokines such as TNFA and IL1B. Regulates cranial suture patterning and fusion. Activates transcription as a heterodimer with E proteins. Regulates gene expression differentially, depending on dimer composition. Homodimers induce expression of FGFR2 and POSTN while heterodimers repress FGFR2 and POSTN expression and induce THBS1 expression. Heterodimerization is also required for osteoblast differentiation. Represses the activity of the circadian transcriptional activator: NPAS2-BMAL1 heterodimer. This is Twist-related protein 1 (TWIST1) from Microcebus murinus (Gray mouse lemur).